Reading from the N-terminus, the 440-residue chain is R3H and coiled-coil domain-containing protein 1 (440 aa).

The 66-residue stretch at 16–81 folds into the R3H domain; it reads NDFVHRIQEE…KRRTVICHQD (66 aa). The segment at 154-225 is disordered; that stretch reads TSVLKREAPA…LGPESQSGKG (72 aa). The span at 157–168 shows a compositional bias: basic and acidic residues; the sequence is LKREAPAGRDPE. S236 carries the post-translational modification Phosphoserine. The stretch at 242–300 forms a coiled coil; the sequence is LEKGKESLLEKRLVAEEEEDEEEVEEDGPSSCSEDDYSELLQEITDNLTKKEIQIEKIH. The segment at 254 to 276 is disordered; sequence LVAEEEEDEEEVEEDGPSSCSED. Over residues 257-276 the composition is skewed to acidic residues; that stretch reads EEEEDEEEVEEDGPSSCSED.

The sequence is that of R3H and coiled-coil domain-containing protein 1 from Homo sapiens (Human).